A 255-amino-acid chain; its full sequence is tRNA (guanine-N(1)-)-methyltransferase (255 aa).

Residues glycine 113 and 133-138 (IGDYVL) each bind S-adenosyl-L-methionine.

Belongs to the RNA methyltransferase TrmD family. Homodimer.

Its subcellular location is the cytoplasm. It catalyses the reaction guanosine(37) in tRNA + S-adenosyl-L-methionine = N(1)-methylguanosine(37) in tRNA + S-adenosyl-L-homocysteine + H(+). In terms of biological role, specifically methylates guanosine-37 in various tRNAs. The protein is tRNA (guanine-N(1)-)-methyltransferase of Escherichia fergusonii (strain ATCC 35469 / DSM 13698 / CCUG 18766 / IAM 14443 / JCM 21226 / LMG 7866 / NBRC 102419 / NCTC 12128 / CDC 0568-73).